The following is a 1720-amino-acid chain: Merozoite surface protein 1 (1720 aa).

A signal peptide spans 1–19 (MKIIFFLCSFLFFIINTQC). The segment covering 63-112 (ASAQSGASAQSGASAQSGASAQSGASAQSGASAQSGTSGPSGPSGTSPSS) has biased composition (low complexity). The segment at 63–137 (ASAQSGASAQ…PPADASDSDA (75 aa)) is disordered. Positions 113–122 (RSNTLPRSNT) are enriched in polar residues. Residues 123-132 (SSGASPPADA) are compositionally biased toward low complexity. The stretch at 474-519 (INNIKKKIDLEEKNINHTKEQNKKLLEDYEKSKKDYEELLEKFYEM) forms a coiled coil. Disordered regions lie at residues 723-775 (SETT…PPKE), 908-955 (TGTS…SGPA), 1249-1278 (TPPQ…TQIP), and 1470-1491 (KEKF…DEQK). The segment covering 743–753 (EVTEETEETEE) has biased composition (acidic residues). The span at 908 to 946 (TGTSSTSSPGNTTVNTAQSATHSNSQNQQSNASSTNTQN) shows a compositional bias: low complexity. Polar residues predominate over residues 1264-1278 (VSGSSGSTKEETQIP). Residues 1475–1484 (SSPPTTPPSP) show a composition bias toward pro residues. 2 consecutive EGF-like domains span residues 1611-1651 (HQCV…VENP) and 1652-1693 (NPTC…YPLF). 6 disulfide bridges follow: C1613–C1624, C1618–C1634, C1636–C1647, C1655–C1668, C1662–C1682, and C1684–C1698. The GPI-anchor amidated serine moiety is linked to residue S1699. Positions 1700–1720 (SSNFLGISFLLILMLILYSFI) are cleaved as a propeptide — removed in mature form.

Forms a complex composed of subunits p83, p30, p38, and p42 which remain non-covalently associated; the complex is formed at the merozoite surface prior to egress from host erythrocytes. Forms a complex composed of processed MSP1 subunits, MSP6 subunit p36 and MSP7; the complex is formed at the merozoite surface prior to egress from host erythrocytes. Within the complex, interacts (via subunit p38) with MSP6 subunit p36 and (via subunits p83, p30 and p38) with MSP7 (via subunit p22). Forms a complex composed of MSP1, MSP6, DBLMSP1 and DBLMSP2. Within the complex, interacts (via subunit p38) with DBLMSP1 and DBLMSP2. Forms a complex composed of MSP1, and rhoptry proteins RhopH3, RAP1 and CLAG9/RhopH3. Within the complex, interacts (via subunits p42 and p19) with RhopH3 (via C-terminus). Forms a complex composed of MSP1, MSP6, MSP7, MSP9 and MSP3; within the complex, MSP6 and MSP9 mediate the binding to the host erythrocyte. Interacts (via subunits p19 and p42) with MSP9; the interaction is direct; MSP1 subunits p19 or p42, and MSP9 form a co-ligand complex that interacts with host SLC4A1/Band 3 protein. May interact with PFD6. Interacts with host spectrin. As to quaternary structure, interacts with host glycophorin GYPA in a sialic acid-independent manner. In terms of assembly, interacts with host proinflammatory cytokine S100P; the interaction blocks S100P inflammatory and chemotactic activities. Interacts with host SLC4A1/Band 3 (via 5ABC region) on the host erythrocyte surface in a sialic acid-independent manner. Post-translationally, the p190 precursor is cleaved by SUB1 prior to merozoite egress into 4 subunits p83, p30, p38, and p42 which remain non-covalently associated. SUB1-mediated proteolytic cleavage occurs in an orderly manner; the first cleavage occurs at the p30/p38 site, followed by cleavage at the p83/p30 site, in the 3D7 strain a second cleavage occurs at the N-terminus of p83, the last cleavage occurs at the p38/p42 site. The order of cleavage is essential for parasite viability. SUB1-mediated processing is essential for merozoite egress. In a second processing step during erythrocyte invasion, p42 is cleaved by SUB2 into p33 and p19; the latter remains attached to the merozoite surface via its GPI-anchor and is endocytosed during the subsequent ring stage.

The protein localises to the cell membrane. Its subcellular location is the secreted. It localises to the vacuole membrane. Functionally, during the asexual blood stage, involved in merozoite egress from host erythrocytes possibly via its interaction with the host cytoskeleton protein spectrin resulting in the destabilization of the host cytoskeleton and thus leading to erythrocyte cell membrane rupture. Involved in the binding to host erythrocytes and is required for host erythrocyte invasion. In terms of biological role, by binding to host proinflammatory cytokine S100P may interfere with host immune responses. Its function is as follows. Involved in merozoite invasion of host erythrocytes. May play a role in the biogenesis and/or function of the food vacuole during the intraerythrocytic development. In Plasmodium falciparum (isolate 3D7), this protein is Merozoite surface protein 1.